The primary structure comprises 303 residues: Porphobilinogen deaminase (303 aa).

At Cys241 the chain carries S-(dipyrrolylmethanemethyl)cysteine.

The protein belongs to the HMBS family. As to quaternary structure, monomer. Dipyrromethane serves as cofactor.

It carries out the reaction 4 porphobilinogen + H2O = hydroxymethylbilane + 4 NH4(+). It participates in porphyrin-containing compound metabolism; protoporphyrin-IX biosynthesis; coproporphyrinogen-III from 5-aminolevulinate: step 2/4. It functions in the pathway porphyrin-containing compound metabolism; chlorophyll biosynthesis. Its function is as follows. Tetrapolymerization of the monopyrrole PBG into the hydroxymethylbilane pre-uroporphyrinogen in several discrete steps. This is Porphobilinogen deaminase from Roseiflexus castenholzii (strain DSM 13941 / HLO8).